Consider the following 562-residue polypeptide: RNA N(6)-adenosine-methyltransferase METTL16 (562 aa).

Positions 17–20 are RNA-binding; it reads PPDF. Arg-82, Gly-110, Ser-114, Glu-133, Thr-164, and Asn-184 together coordinate S-adenosyl-L-methionine. Residues 163 to 167 form a K-loop region; it reads KTLLM. RNA-binding stretches follow at residues 199 to 211, 250 to 254, and 277 to 283; these read SRNPRRPPPSSVN, GKKCS, and QGRTMRW. Positions 289 to 400 are VCR 1; that stretch reads FYDDVTVPSP…QLREVPRAPE (112 aa). Ser-329 carries the post-translational modification Phosphoserine. Basic and acidic residues predominate over residues 402–413; it reads VIQALEEKKPTP. The disordered stretch occupies residues 402-498; the sequence is VIQALEEKKP…DQEASEQFGS (97 aa). The span at 458–467 shows a compositional bias: acidic residues; sequence ENPEPTEDER. The residue at position 463 (Thr-463) is a Phosphothreonine. The segment covering 480–496 has biased composition (polar residues); it reads CQGSSNGAQDQEASEQF. A VCR 2 region spans residues 514–562; that stretch reads YLFKCLINVKKEVDDALVEMHWVEGQNRDLMNQLCTYIRNQIFRLVAVN.

The protein belongs to the methyltransferase superfamily. METTL16/RlmF family. Interacts with MEPCE. Interacts with LARP7.

The protein resides in the nucleus. Its subcellular location is the cytoplasm. The catalysed reaction is adenosine in U6 snRNA + S-adenosyl-L-methionine = N(6)-methyladenosine in U6 snRNA + S-adenosyl-L-homocysteine + H(+). It carries out the reaction an adenosine in mRNA + S-adenosyl-L-methionine = an N(6)-methyladenosine in mRNA + S-adenosyl-L-homocysteine + H(+). Methyltransferase activity is autoinhibited by the K-loop region that blocks S-adenosyl-L-methionine-binding. Upon activation, K-loop changes conformation, allowing S-adenosyl-L-methionine-binding and subsequent methyltransferase activity. mRNA N6-adenosine-methyltransferase activity is inhibited by zinc. RNA N6-methyltransferase that methylates adenosine residues at the N(6) position of a subset of RNAs and is involved in S-adenosyl-L-methionine homeostasis by regulating expression of MAT2A transcripts. Able to N6-methylate a subset of mRNAs and U6 small nuclear RNAs (U6 snRNAs). In contrast to the METTL3-METTL14 heterodimer, only able to methylate a limited number of RNAs: requires both a 5'UACAGAGAA-3' nonamer sequence and a specific RNA structure. Plays a key role in S-adenosyl-L-methionine homeostasis by mediating N6-methylation of MAT2A mRNAs, altering splicing of MAT2A transcripts: in presence of S-adenosyl-L-methionine, binds the 3'-UTR region of MAT2A mRNA and specifically N6-methylates the first hairpin of MAT2A mRNA, preventing recognition of their 3'-splice site by U2AF1/U2AF35, thereby inhibiting splicing and protein production of S-adenosylmethionine synthase. In S-adenosyl-L-methionine-limiting conditions, binds the 3'-UTR region of MAT2A mRNA but stalls due to the lack of a methyl donor, preventing N6-methylation and promoting expression of MAT2A. In addition to mRNAs, also able to mediate N6-methylation of U6 small nuclear RNA (U6 snRNA): specifically N6-methylates adenine in position 43 of U6 snRNAs. Also able to bind various lncRNAs, such as 7SK snRNA (7SK RNA) or 7SL RNA. Specifically binds the 3'-end of the MALAT1 long non-coding RNA. This is RNA N(6)-adenosine-methyltransferase METTL16 from Homo sapiens (Human).